The chain runs to 271 residues: Aquaporin-1 (271 aa).

Residues 1–11 (MASEFKKKIFW) lie on the Cytoplasmic side of the membrane. A helical membrane pass occupies residues 12–29 (RAVVAEFLAMTLFIFISI). At 30–48 (GSALGFQYPVRNNQTSGAA) the chain is on the extracellular side. Residue N42 is glycosylated (N-linked (GlcNAc...) asparagine). The chain crosses the membrane as a helical span at residues 49–67 (QDNVKVSLAFGLSIATLAQ). Residues 68–70 (SVG) lie on the Cytoplasmic side of the membrane. Residues 71–84 (HISGAHLNPAVTLG) lie within the membrane without spanning it. The NPA 1 signature appears at 78 to 80 (NPA). At 85-92 (LLLSCQIS) the chain is on the cytoplasmic side. A helical membrane pass occupies residues 93–111 (VLRAVMYIIAQCVGAIVAT). The Extracellular portion of the chain corresponds to 112 to 135 (AILSGITSSLPGNSLGLNSLAPGV). A helical transmembrane segment spans residues 136–155 (DSGQGLGIEIIGTLQLVLCV). Residues 156 to 165 (LATTDRRRRD) lie on the Cytoplasmic side of the membrane. Residues 166 to 183 (LGGSAPLAIGFSVALGHL) form a helical membrane-spanning segment. At 184–188 (LAIDY) the chain is on the extracellular side. Residues 189-201 (TGCGINPARSFGS) lie within the membrane without spanning it. Positions 194–196 (NPA) match the NPA 2 motif. The Extracellular portion of the chain corresponds to 202-208 (AVITHNF). A helical membrane pass occupies residues 209-226 (QDHWVFWVGPFIGGALAV). Over 227-271 (LIYDFILAPRSSDLTDRVKVWTSGQVEEYDLDGDDINSRVEMKPK) the chain is Cytoplasmic. At S249 the chain carries Phosphoserine. Y255 bears the Phosphotyrosine mark. S264 bears the Phosphoserine mark.

It belongs to the MIP/aquaporin (TC 1.A.8) family. Homotetramer; each monomer provides an independent water pore. Component of the ankyrin-1 complex in the erythrocyte, composed of ANK1, RHCE, RHAG, SLC4A1, EPB42, GYPA, GYPB and AQP1. Interacts with EPHB2; involved in endolymph production in the inner ear. Identified in a complex with STOM. Interacts (via the N-terminal) with ANK1 (via ANK 1-5 repeats). Interacts (via the C-terminal) with EPB42.

It is found in the cell membrane. It carries out the reaction H2O(in) = H2O(out). The catalysed reaction is nitric oxide(out) = nitric oxide(in). The enzyme catalyses CO2(out) = CO2(in). It catalyses the reaction glycerol(in) = glycerol(out). It carries out the reaction H2O2(out) = H2O2(in). The catalysed reaction is K(+)(in) = K(+)(out). The enzyme catalyses Na(+)(in) = Na(+)(out). Functionally, forms a water channel that facilitates the transport of water across cell membranes, playing a crucial role in water homeostasis in various tissues. Could also be permeable to small solutes including hydrogen peroxide, glycerol and gases such as amonnia (NH3), nitric oxide (NO) and carbon dioxide (CO2). Recruited to the ankyrin-1 complex, a multiprotein complex of the erythrocyte membrane, it could be part of a CO2 metabolon, linking facilitated diffusion of CO2 across the membrane, anion exchange of Cl(-)/HCO3(-) and interconversion of dissolved CO2 and carbonic acid in the cytosol. In vitro, it shows non-selective gated cation channel activity and may be permeable to cations like K(+) and Na(+) in vivo. This chain is Aquaporin-1, found in Sus scrofa (Pig).